Reading from the N-terminus, the 258-residue chain is Acyl-[acyl-carrier-protein]--UDP-N-acetylglucosamine O-acyltransferase (258 aa).

Belongs to the transferase hexapeptide repeat family. LpxA subfamily. In terms of assembly, homotrimer.

Its subcellular location is the cytoplasm. It carries out the reaction a (3R)-hydroxyacyl-[ACP] + UDP-N-acetyl-alpha-D-glucosamine = a UDP-3-O-[(3R)-3-hydroxyacyl]-N-acetyl-alpha-D-glucosamine + holo-[ACP]. It functions in the pathway glycolipid biosynthesis; lipid IV(A) biosynthesis; lipid IV(A) from (3R)-3-hydroxytetradecanoyl-[acyl-carrier-protein] and UDP-N-acetyl-alpha-D-glucosamine: step 1/6. Involved in the biosynthesis of lipid A, a phosphorylated glycolipid that anchors the lipopolysaccharide to the outer membrane of the cell. This Pseudomonas aeruginosa (strain LESB58) protein is Acyl-[acyl-carrier-protein]--UDP-N-acetylglucosamine O-acyltransferase.